A 426-amino-acid polypeptide reads, in one-letter code: Histidine--tRNA ligase (426 aa).

It belongs to the class-II aminoacyl-tRNA synthetase family. As to quaternary structure, homodimer.

It localises to the cytoplasm. The catalysed reaction is tRNA(His) + L-histidine + ATP = L-histidyl-tRNA(His) + AMP + diphosphate + H(+). The polypeptide is Histidine--tRNA ligase (Hydrogenovibrio crunogenus (strain DSM 25203 / XCL-2) (Thiomicrospira crunogena)).